The sequence spans 255 residues: 3-hydroxyacyl-CoA dehydrogenase type-2 (255 aa).

S14, L16, D35, D58, V59, and C85 together coordinate NAD(+). Residue S149 participates in substrate binding. The NAD(+) site is built by Y162, K166, F195, and T197. Y162 functions as the Proton acceptor in the catalytic mechanism.

The protein belongs to the short-chain dehydrogenases/reductases (SDR) family. As to quaternary structure, component of mitochondrial ribonuclease P, a complex composed of rswl/MRPP1, scu/MRPP2 and mldr/MRPP3. As to expression, found in many tissues including CNS, imaginal disks and salivary glands. Highest expression in both embryonic gonadal primordia and mature ovaries and testes.

It localises to the mitochondrion. The enzyme catalyses a (3S)-3-hydroxyacyl-CoA + NAD(+) = a 3-oxoacyl-CoA + NADH + H(+). It carries out the reaction (3S)-3-hydroxybutanoyl-CoA + NAD(+) = acetoacetyl-CoA + NADH + H(+). It catalyses the reaction testosterone + NAD(+) = androst-4-ene-3,17-dione + NADH + H(+). The catalysed reaction is 5alpha-androstane-3alpha,17beta-diol + NAD(+) = 17beta-hydroxy-5alpha-androstan-3-one + NADH + H(+). The enzyme catalyses 17beta-estradiol + NAD(+) = estrone + NADH + H(+). It carries out the reaction ursodeoxycholate + NAD(+) = 7-oxolithocholate + NADH + H(+). It catalyses the reaction 3beta,7beta-dihydroxy-5beta-cholan-24-oate + NAD(+) = 3beta-hydroxy-7-oxo-5beta-cholan-24-oate + NADH + H(+). The catalysed reaction is 11-dehydrocorticosterone + NAD(+) = pregn-4-ene-3,11,20,21-tetraone + NADH + H(+). The enzyme catalyses cortisone + NAD(+) = 17alpha-hydroxypregn-4-en-3,11,20-trione-21-al + NADH + H(+). It carries out the reaction cortisol + NAD(+) = 11beta,17alpha-dihydroxypregn-4-ene-3,20,21-trione + NADH + H(+). It catalyses the reaction 5alpha-pregnan-20beta-ol-3-one + NAD(+) = 5alpha-pregnane-3,20-dione + NADH + H(+). The catalysed reaction is 17beta-hydroxy-5alpha-androstan-3-one + NAD(+) = 5alpha-androstan-3,17-dione + NADH + H(+). Its function is as follows. Mitochondrial dehydrogenase involved in pathways of fatty acid, and steroid metabolism. Versatile enzyme presenting two types of activity; L-3-hydroxyacyl-CoA dehydrogenase ((3S)-3-hydroxyacyl-CoA dehydrogenase) activity and hydroxysteroid dehydrogenase (HSD) activity with a wide substrate spectrum. As a (3S)-3-hydroxyacyl-CoA dehydrogenase, it functions in the third step of the fatty acid beta-oxidation pathway, a major metabolic process in which fatty acids are oxidized to provide a significant source of energy, while also generating acyl-CoA metabolites used by many metabolic routes. As a HSD, it functions in the degradation pathways of glucocorticoids and sex steroids and epimerization of bile acids; catalyzes the beta-oxidation at position 17 of androgens and estrogens, has 3-alpha-hydroxysteroid dehydrogenase activity with androsterone, and carries out oxidative conversions of 7-beta-hydroxylated bile acids like ursodeoxycholate or isoursodeoxycholate (also known as 3-beta,7-beta-dihydroxy-5-beta-cholan-24-oate or 7-beta-hydroxyisolithocholate, respectively). Also exhibits 20-beta-OH and 21-OH dehydrogenase activities with C21 steroids. Essential for structural and functional integrity of mitochondria. Required for cell survival during embryonic development. May play a role in germline formation. In terms of biological role, in addition to mitochondrial dehydrogenase activity, moonlights as a component of mitochondrial ribonuclease P, a complex that cleaves tRNA molecules in their 5'-ends. Essential for the structural and functional integrity of mitochondria. Function is essential for pupal development. This is 3-hydroxyacyl-CoA dehydrogenase type-2 from Drosophila melanogaster (Fruit fly).